Consider the following 520-residue polypeptide: Phospholipase C A (520 aa).

Residues 1–38 (MSASPLLGMSRREFLTKLTGAGAAAFLMDWAAPVIEKA) constitute a signal peptide (tat-type signal).

This sequence belongs to the bacterial phospholipase C family. Post-translationally, predicted to be exported by the Tat system. The position of the signal peptide cleavage has not been experimentally proven.

It localises to the secreted. The protein localises to the cell wall. The enzyme catalyses a 1,2-diacyl-sn-glycero-3-phosphocholine + H2O = phosphocholine + a 1,2-diacyl-sn-glycerol + H(+). Its function is as follows. Involved in virulence. Induces cytotoxic effects on mouse macrophage cell lines, via direct or indirect enzymatic hydrolysis of cell membrane phospholipids. Hydrolyzes phosphatidylcholine. The protein is Phospholipase C A of Mycobacterium tuberculosis (strain CDC 1551 / Oshkosh).